A 299-amino-acid polypeptide reads, in one-letter code: MPLLNDLLDFSDHPLMPPPSAQLFAEHLPTEWIQHCLTLSAHATVRRRRLPGDMVIWMVVQNEPITDVVRRLNLSADGEAGMNLLARSAVTQARQRVGAAPVEWLFRQTAQDRGAERYLKDDWHGLQLFAIDGAQFRTPDKPELREYYGSANTSTKRQNAYPVMRLVALMNLGSHILLNAVTAPYRQSETVLAHSMLATIPDNSITLFDKLFYSEDLLLTLNQKGCNRHWLLPAWKNIASEMIELGNTASPGTIPKRLEHLRGALEVVFITKRPRPSRPRSVKISKTRYPVKHSAAPLK.

Basic residues predominate over residues 276-291 (PSRPRSVKISKTRYPV). The tract at residues 276 to 299 (PSRPRSVKISKTRYPVKHSAAPLK) is disordered.

In Escherichia coli (strain K12), this protein is Putative transposase InsZ (insZ).